We begin with the raw amino-acid sequence, 219 residues long: Orotate phosphoribosyltransferase (219 aa).

Residue K26 participates in 5-phospho-alpha-D-ribose 1-diphosphate binding. Residue 34–35 participates in orotate binding; it reads FF. Residues 72–73, R98, K99, K102, H104, and 124–132 each bind 5-phospho-alpha-D-ribose 1-diphosphate; these read YK and DDVITAGTA. Positions 128 and 156 each coordinate orotate.

It belongs to the purine/pyrimidine phosphoribosyltransferase family. PyrE subfamily. Homodimer. The cofactor is Mg(2+).

It carries out the reaction orotidine 5'-phosphate + diphosphate = orotate + 5-phospho-alpha-D-ribose 1-diphosphate. The protein operates within pyrimidine metabolism; UMP biosynthesis via de novo pathway; UMP from orotate: step 1/2. Its function is as follows. Catalyzes the transfer of a ribosyl phosphate group from 5-phosphoribose 1-diphosphate to orotate, leading to the formation of orotidine monophosphate (OMP). In Xylella fastidiosa (strain 9a5c), this protein is Orotate phosphoribosyltransferase.